Consider the following 399-residue polypeptide: uncharacterized protein (399 aa).

11 helical membrane-spanning segments follow: residues 19-39 (IFSINLLYMGILSGISYPLFV), 46-66 (VNLLFAIVIGAVFEIPLLLMY), 91-111 (FYTIFGISLWLTYVLSQPILG), 123-143 (QFEQFLIVESLFPLVLLIIAS), 146-166 (IYAKIVDILAIFQIIIAIFIA), 183-203 (LLSALLFDLSAFIFINAISYI), 225-247 (VAILSILDSYSNLNILFALMPIW), 283-303 (VLLLIFSTETIANVLENLLGF), 307-327 (FGLDGLLFIFWNFIIVAFAYL), 335-355 (LFSIVLTSLAIQIFLFFYLGY), and 369-389 (IEYTILRIMILPIIGAIVYLL).

The protein localises to the host membrane. Putative amino acid transporter. This is an uncharacterized protein from Saccharolobus islandicus (Sulfolobus islandicus).